We begin with the raw amino-acid sequence, 338 residues long: MRLLKQLDNNITLTQSETTQFITYLTNPEINVEDKVDLLTQFTKKEIKQQELTYVVNSLIQTMYPNQPTYEGSICVCGTGGDKSNSFNISTTVSFIVASAGIPVIKHGNRSITSHSGSTDLLNELGIKTTKVSEVPLQIEEQGLAFISAMESYPIMKYIQPVRKMISTPTIFNIVGPLINPFKLTYQVLGVYDPSRLYMIAQTLKDLGRRRAIVLHGANGMDEATLSGNNEVYELNENGDITHYFINAKDYGLKVASNQDLQGGSPKENKMITLDILSGDDKTCRRDVVVLNAALALYVSEKVDTIASGISLATILIDSGRAMVQFMKMRGDICDDIK.

5-phospho-alpha-D-ribose 1-diphosphate contacts are provided by residues glycine 78, 81-82 (GD), serine 86, 88-91 (NIST), 106-114 (KHGNRSITS), and serine 118. Residue glycine 78 coordinates anthranilate. Position 90 (serine 90) interacts with Mg(2+). Asparagine 109 serves as a coordination point for anthranilate. Residue arginine 163 participates in anthranilate binding. Residues aspartate 222 and glutamate 223 each coordinate Mg(2+).

It belongs to the anthranilate phosphoribosyltransferase family. Homodimer. Requires Mg(2+) as cofactor.

The catalysed reaction is N-(5-phospho-beta-D-ribosyl)anthranilate + diphosphate = 5-phospho-alpha-D-ribose 1-diphosphate + anthranilate. It participates in amino-acid biosynthesis; L-tryptophan biosynthesis; L-tryptophan from chorismate: step 2/5. Its function is as follows. Catalyzes the transfer of the phosphoribosyl group of 5-phosphorylribose-1-pyrophosphate (PRPP) to anthranilate to yield N-(5'-phosphoribosyl)-anthranilate (PRA). The chain is Anthranilate phosphoribosyltransferase from Staphylococcus haemolyticus (strain JCSC1435).